The following is a 434-amino-acid chain: UDP-glucose 6-dehydrogenase (434 aa).

Residues 2–19 (NITFIGSGYVGLVSGVMM), valine 11, aspartate 30, lysine 35, threonine 121, and glutamate 152 contribute to the NAD(+) site. Residues 148–152 (EFLRE), lysine 204, asparagine 208, 249–253 (FLNAG), and glycine 257 contribute to the substrate site. Cysteine 260 (nucleophile) is an active-site residue. Residue lysine 263 participates in NAD(+) binding. Lysine 321 lines the substrate pocket. Residue arginine 328 coordinates NAD(+).

Belongs to the UDP-glucose/GDP-mannose dehydrogenase family.

It carries out the reaction UDP-alpha-D-glucose + 2 NAD(+) + H2O = UDP-alpha-D-glucuronate + 2 NADH + 3 H(+). Its pathway is nucleotide-sugar biosynthesis; UDP-alpha-D-glucuronate biosynthesis; UDP-alpha-D-glucuronate from UDP-alpha-D-glucose: step 1/1. The chain is UDP-glucose 6-dehydrogenase (udg) from Rickettsia bellii (strain RML369-C).